A 413-amino-acid polypeptide reads, in one-letter code: MTPIRHLTILGSTGSIGESTLDVVARHPDRFQAVALTADKNVEKMFEQCKRFYPSYAVMLNAQSAEQLEAKLRVAGLGTMVLSGIESLEKVASLPEIDTVMAAIVGAAGIRPTLSAAQAGKHILLANKETLVMAGRIFMDTIRQYHATLLPIDSEHNAIFQSLPQHYNGDLISSGVRRILLTASGGPFHKADLQTLSTVTPEQACAHPNWVMGRKISVDSATMMNKGLEVIEAHWLFNVEPEKIQVVVHPQSVIHSMVEYIDGSVLAQLGNPDMRTPIAHALGYPERIESGVQSMDIFKIAQLNFEAPDFERFPCLRLAYEALSKGGNMPAVLNAANEVAVEVFLAGKIPFTVIPAIIEHVMESIDRQEITDLEDVLAADLRARETARKWLDTQAWQRGQSGAPLFRAEQWNG.

Thr-13, Gly-14, Ser-15, Ile-16, Lys-40, Asn-41, and Asn-127 together coordinate NADPH. Lys-128 lines the 1-deoxy-D-xylulose 5-phosphate pocket. Glu-129 contributes to the NADPH binding site. Mn(2+) is bound at residue Asp-153. 1-deoxy-D-xylulose 5-phosphate is bound by residues Ser-154, Glu-155, Ser-184, and His-207. Glu-155 contributes to the Mn(2+) binding site. Gly-213 is a binding site for NADPH. 1-deoxy-D-xylulose 5-phosphate contacts are provided by Ser-220, Asn-225, Lys-226, and Glu-229. Mn(2+) is bound at residue Glu-229.

This sequence belongs to the DXR family. Mg(2+) is required as a cofactor. The cofactor is Mn(2+).

The catalysed reaction is 2-C-methyl-D-erythritol 4-phosphate + NADP(+) = 1-deoxy-D-xylulose 5-phosphate + NADPH + H(+). It functions in the pathway isoprenoid biosynthesis; isopentenyl diphosphate biosynthesis via DXP pathway; isopentenyl diphosphate from 1-deoxy-D-xylulose 5-phosphate: step 1/6. Functionally, catalyzes the NADPH-dependent rearrangement and reduction of 1-deoxy-D-xylulose-5-phosphate (DXP) to 2-C-methyl-D-erythritol 4-phosphate (MEP). The protein is 1-deoxy-D-xylulose 5-phosphate reductoisomerase of Nitrosomonas eutropha (strain DSM 101675 / C91 / Nm57).